Consider the following 350-residue polypeptide: Probable poly-beta-1,6-N-acetyl-D-glucosamine export protein (350 aa).

10 helical membrane passes run 8 to 28, 40 to 60, 83 to 103, 119 to 139, 146 to 166, 182 to 202, 216 to 236, 254 to 274, 276 to 296, and 308 to 328; these read LVYL…LTQI, LVLQ…FIIL, YILI…SLLT, QWYG…YIIF, FNSK…LYYF, LSEN…AYMG, LVIM…LANG, IMFI…FNTI, MISA…DSLF, and VFLA…GMIL.

It belongs to the acyltransferase 3 family.

The protein resides in the cell membrane. Presumably involved in the export of the biofilm adhesin polysaccharide poly-beta-1,6-N-acetyl-D-glucosamine (PNAG, also referred to as PIA) across the cell membrane. This chain is Probable poly-beta-1,6-N-acetyl-D-glucosamine export protein (icaC), found in Staphylococcus aureus (strain NCTC 8325 / PS 47).